The sequence spans 90 residues: Probable Fe(2+)-trafficking protein (90 aa).

This sequence belongs to the Fe(2+)-trafficking protein family.

Its function is as follows. Could be a mediator in iron transactions between iron acquisition and iron-requiring processes, such as synthesis and/or repair of Fe-S clusters in biosynthetic enzymes. This Vibrio vulnificus (strain CMCP6) protein is Probable Fe(2+)-trafficking protein.